A 324-amino-acid chain; its full sequence is Myoblast determination protein 1 homolog (324 aa).

The disordered stretch occupies residues 125–146 (VDSQHEDTTTSTAGGAGVGGPR). Residues 155–206 (DRRKAATMRERRRLRKVNEAFEVVKQRTCPNPNQRLPKVEILRSAIDYINNL) form the bHLH domain. A disordered region spans residues 251–272 (YNPENMFDDDDLTDSDDDRDHH). The span at 256–267 (MFDDDDLTDSDD) shows a compositional bias: acidic residues.

In terms of assembly, efficient DNA binding requires dimerization with another bHLH protein. In terms of tissue distribution, body wall muscle cells; in clonal muscle precursors, in a set of early embryonic blastomeres (the ms-granddaughters), and in six glial-like cells called GLRS.

It localises to the nucleus. Its function is as follows. Involved in myogenesis, in cooperation with transcription factors unc-120 and hnd-1. Acts redundantly with fozi-1 to promote body wall muscle cell and coelomocyte specification in postembryonic mesoderm progenitors, probably through suppression of sem-2. This Caenorhabditis elegans protein is Myoblast determination protein 1 homolog.